We begin with the raw amino-acid sequence, 115 residues long: UPF0122 protein lp_1634 (115 aa).

The protein belongs to the UPF0122 family.

Its function is as follows. Might take part in the signal recognition particle (SRP) pathway. This is inferred from the conservation of its genetic proximity to ftsY/ffh. May be a regulatory protein. In Lactiplantibacillus plantarum (strain ATCC BAA-793 / NCIMB 8826 / WCFS1) (Lactobacillus plantarum), this protein is UPF0122 protein lp_1634.